The primary structure comprises 275 residues: Thiazole synthase (275 aa).

Residue Lys-116 is the Schiff-base intermediate with DXP of the active site. Residues Gly-177, 203 to 204 (AG), and 225 to 226 (NT) each bind 1-deoxy-D-xylulose 5-phosphate.

Belongs to the ThiG family. As to quaternary structure, homotetramer. Forms heterodimers with either ThiH or ThiS.

It localises to the cytoplasm. It catalyses the reaction [ThiS sulfur-carrier protein]-C-terminal-Gly-aminoethanethioate + 2-iminoacetate + 1-deoxy-D-xylulose 5-phosphate = [ThiS sulfur-carrier protein]-C-terminal Gly-Gly + 2-[(2R,5Z)-2-carboxy-4-methylthiazol-5(2H)-ylidene]ethyl phosphate + 2 H2O + H(+). Its pathway is cofactor biosynthesis; thiamine diphosphate biosynthesis. Catalyzes the rearrangement of 1-deoxy-D-xylulose 5-phosphate (DXP) to produce the thiazole phosphate moiety of thiamine. Sulfur is provided by the thiocarboxylate moiety of the carrier protein ThiS. In vitro, sulfur can be provided by H(2)S. The protein is Thiazole synthase of Acaryochloris marina (strain MBIC 11017).